The chain runs to 419 residues: Carboxypeptidase A1 (419 aa).

The first 16 residues, 1–16 (MKRLLILSLLLEAVCG), serve as a signal peptide directing secretion. The propeptide at 17–110 (NENFVGHQVL…KQQMSAFQAR (94 aa)) is activation peptide. Positions 121–414 (TYHTLDEIYE…LALLTIMDHT (294 aa)) constitute a Peptidase M14 domain. Zn(2+)-binding residues include His-179 and Glu-182. Substrate is bound by residues 179 to 182 (HSRE), Arg-237, and 254 to 255 (NR). A disulfide bond links Cys-248 and Cys-271. His-306 lines the Zn(2+) pocket. Substrate contacts are provided by residues 307–308 (SY) and Tyr-358. Glu-380 functions as the Proton donor/acceptor in the catalytic mechanism.

Belongs to the peptidase M14 family. In terms of assembly, monomer. May form a complex with proelastase 2. The cofactor is Zn(2+).

It is found in the secreted. It carries out the reaction Release of a C-terminal amino acid, but little or no action with -Asp, -Glu, -Arg, -Lys or -Pro.. It catalyses the reaction leukotriene C4 + H2O = leukotriene F4 + glycine. Carboxypeptidase that catalyzes the release of a C-terminal amino acid, but has little or no action with -Asp, -Glu, -Arg, -Lys or -Pro. Catalyzes the conversion of leukotriene C4 to leukotriene F4 via the hydrolysis of an amide bond. The polypeptide is Carboxypeptidase A1 (Rattus norvegicus (Rat)).